The sequence spans 645 residues: MDGTVTLSPAPTDLPPVSSLDAGQPTLPPEAPLAMPEQSLREGSLQVRHQRTSPMGIGLRRFYLIGGTLTATAVAVWVMLSVLWPGGFSVLEGCLLGLFVLLFAWIAMSFASAVAGFITVVARAGRKLGIDPDAPLPSLHTRTALLMPTYNEDPRRLLAGLQAIYESVAETGQLEHFDFFVLSDTTREHIGRAEEQVYAELCDSVGGHGRIFYRRRADNAARKAGNVADWVRRFGGNYPQMLILDADSVMTGDTIVRLVAGMEDNPDVGLIQTLPAVVNGQTLFARMQQFGGRVYGPIIAFGVAWWHGAESNYWGHNAIIRTQAFADHAGLPSLRGRKPFGGHVLSHDFVEAALMRRGGWAMHMVPYLQGSYEEGPPTLTDLLVRDRRWCQGNLQHAKVVGAKGLHWISRMHMMIGIGHYFTAPMWGMLMLVGIGIPLAGAGIDLAQGLPFSPARYWHGSSDGNAIWIFVCTMFVLLAPKLLGYIALLLNPRERRACGGAIRAALSILLETVLAALMAPVVMYLQSRGVFEVLAGKDSGWDAQVRDDGKLSWPALIRSYGGLSVFGLFMGTLAYLVSPSLAAWMAPVIVGMVVSIPVVAVTSLRRTGLALRRAGIFCIPEELDPPKVLVRASELRRAAALEPPLI.

The disordered stretch occupies residues 1-28; that stretch reads MDGTVTLSPAPTDLPPVSSLDAGQPTLP. A run of 7 helical transmembrane segments spans residues 64–84, 98–118, 423–443, 465–485, 504–524, 558–578, and 580–600; these read LIGG…SVLW, LFVL…AGFI, APMW…GAGI, AIWI…LGYI, ALSI…VMYL, SYGG…LVSP, and LAAW…VVAV.

It belongs to the glycosyltransferase 2 family. OpgH subfamily.

It localises to the cell inner membrane. It functions in the pathway glycan metabolism; osmoregulated periplasmic glucan (OPG) biosynthesis. Functionally, involved in the biosynthesis of osmoregulated periplasmic glucans (OPGs). This is Glucans biosynthesis glucosyltransferase H from Xanthomonas campestris pv. campestris (strain B100).